A 197-amino-acid chain; its full sequence is Imidazoleglycerol-phosphate dehydratase (197 aa).

This sequence belongs to the imidazoleglycerol-phosphate dehydratase family.

The protein resides in the cytoplasm. It carries out the reaction D-erythro-1-(imidazol-4-yl)glycerol 3-phosphate = 3-(imidazol-4-yl)-2-oxopropyl phosphate + H2O. It participates in amino-acid biosynthesis; L-histidine biosynthesis; L-histidine from 5-phospho-alpha-D-ribose 1-diphosphate: step 6/9. The polypeptide is Imidazoleglycerol-phosphate dehydratase (Methylocella silvestris (strain DSM 15510 / CIP 108128 / LMG 27833 / NCIMB 13906 / BL2)).